An 86-amino-acid chain; its full sequence is Large ribosomal subunit protein bL27 (86 aa).

Over residues 1 to 10 the composition is skewed to gly residues; it reads MAQKKGGGST. A disordered region spans residues 1-21; sequence MAQKKGGGSTRNGRDSESKRL.

This sequence belongs to the bacterial ribosomal protein bL27 family.

The chain is Large ribosomal subunit protein bL27 from Cupriavidus necator (strain ATCC 17699 / DSM 428 / KCTC 22496 / NCIMB 10442 / H16 / Stanier 337) (Ralstonia eutropha).